The primary structure comprises 498 residues: Signal recognition particle receptor FtsY (498 aa).

Disordered regions lie at residues 1–130 and 147–200; these read MGLF…PNQS and KVES…YNRS. Low complexity predominate over residues 36–46; sequence ALLAETAETAE. Residues 103-120 are compositionally biased toward polar residues; sequence SENSVAAVQNNTETMPSQ. GTP contacts are provided by residues 301–308, 383–387, and 447–450; these read GVNGVGKT, DTAGR, and TKID.

It belongs to the GTP-binding SRP family. FtsY subfamily. Part of the signal recognition particle protein translocation system, which is composed of SRP and FtsY.

The protein resides in the cell membrane. The protein localises to the cytoplasm. It carries out the reaction GTP + H2O = GDP + phosphate + H(+). Functionally, involved in targeting and insertion of nascent membrane proteins into the cytoplasmic membrane. Acts as a receptor for the complex formed by the signal recognition particle (SRP) and the ribosome-nascent chain (RNC). This Streptococcus mutans serotype c (strain ATCC 700610 / UA159) protein is Signal recognition particle receptor FtsY.